Consider the following 179-residue polypeptide: Adenine phosphoribosyltransferase (179 aa).

Belongs to the purine/pyrimidine phosphoribosyltransferase family. In terms of assembly, homodimer.

It localises to the cytoplasm. The enzyme catalyses AMP + diphosphate = 5-phospho-alpha-D-ribose 1-diphosphate + adenine. Its pathway is purine metabolism; AMP biosynthesis via salvage pathway; AMP from adenine: step 1/1. Functionally, catalyzes a salvage reaction resulting in the formation of AMP, that is energically less costly than de novo synthesis. This is Adenine phosphoribosyltransferase from Haemophilus ducreyi (strain 35000HP / ATCC 700724).